The following is a 326-amino-acid chain: Phospho-N-acetylmuramoyl-pentapeptide-transferase (326 aa).

10 helical membrane passes run 4–24 (IWVA…LVIP), 49–69 (TPTM…FLLI), 74–94 (GLIV…DDYI), 109–129 (KLLG…FEAG), 151–171 (LGWW…SNAV), 179–199 (GLAA…ALAA), 203–223 (GVAA…FFNF), 228–248 (VFMG…AAVV), 254–274 (LFLI…IQVI), and 303–323 (VVIT…AGLY).

It belongs to the glycosyltransferase 4 family. MraY subfamily. It depends on Mg(2+) as a cofactor.

It localises to the cell membrane. It carries out the reaction UDP-N-acetyl-alpha-D-muramoyl-L-alanyl-gamma-D-glutamyl-meso-2,6-diaminopimeloyl-D-alanyl-D-alanine + di-trans,octa-cis-undecaprenyl phosphate = di-trans,octa-cis-undecaprenyl diphospho-N-acetyl-alpha-D-muramoyl-L-alanyl-D-glutamyl-meso-2,6-diaminopimeloyl-D-alanyl-D-alanine + UMP. It participates in cell wall biogenesis; peptidoglycan biosynthesis. Its function is as follows. Catalyzes the initial step of the lipid cycle reactions in the biosynthesis of the cell wall peptidoglycan: transfers peptidoglycan precursor phospho-MurNAc-pentapeptide from UDP-MurNAc-pentapeptide onto the lipid carrier undecaprenyl phosphate, yielding undecaprenyl-pyrophosphoryl-MurNAc-pentapeptide, known as lipid I. The chain is Phospho-N-acetylmuramoyl-pentapeptide-transferase from Pelotomaculum thermopropionicum (strain DSM 13744 / JCM 10971 / SI).